The following is a 216-amino-acid chain: 3-keto-L-gulonate-6-phosphate decarboxylase UlaD (216 aa).

D11 contributes to the substrate binding site. Positions 33 and 62 each coordinate Mg(2+). Substrate is bound at residue R192.

It belongs to the HPS/KGPDC family. KGPDC subfamily. Homodimer. Mg(2+) serves as cofactor.

It catalyses the reaction 3-dehydro-L-gulonate 6-phosphate + H(+) = L-xylulose 5-phosphate + CO2. Its pathway is cofactor degradation; L-ascorbate degradation; D-xylulose 5-phosphate from L-ascorbate: step 2/4. In terms of biological role, catalyzes the decarboxylation of 3-keto-L-gulonate-6-P into L-xylulose-5-P. Is involved in the anaerobic L-ascorbate utilization. This Shigella dysenteriae serotype 1 (strain Sd197) protein is 3-keto-L-gulonate-6-phosphate decarboxylase UlaD.